We begin with the raw amino-acid sequence, 303 residues long: Eukaryotic translation initiation factor 3 subunit G (303 aa).

The segment at 1-38 (MATQTKHDWADDEDLEETTTTTAPTTDLPPPQKIQNKD) is disordered. The region spanning 223–301 (ATLRVTNVSE…LILRVEFAKK (79 aa)) is the RRM domain.

The protein belongs to the eIF-3 subunit G family. In terms of assembly, component of the eukaryotic translation initiation factor 3 (eIF-3) complex.

Its subcellular location is the cytoplasm. Its function is as follows. RNA-binding component of the eukaryotic translation initiation factor 3 (eIF-3) complex, which is involved in protein synthesis of a specialized repertoire of mRNAs and, together with other initiation factors, stimulates binding of mRNA and methionyl-tRNAi to the 40S ribosome. The eIF-3 complex specifically targets and initiates translation of a subset of mRNAs involved in cell proliferation. This subunit can bind 18S rRNA. In Chaetomium globosum (strain ATCC 6205 / CBS 148.51 / DSM 1962 / NBRC 6347 / NRRL 1970) (Soil fungus), this protein is Eukaryotic translation initiation factor 3 subunit G.